The primary structure comprises 504 residues: MELLWLLLLLLMASSTSSRSEMKAGEVIRRSQFPEDFFFGTASSAYQYEGAVREGGRGPSIWDTFTHNHPEKIANGSNGDIAIDSYHRYKEDVGIMKGLGLNAYRFSVSWPRILPNGKLSGGVNLEGIKYYNNLIDELISKGVEPFVTLFHWDSPQALEQQYGGFLSNLIVEDFRDYADICFREFGDRVKYWITFNEPWSFSIGGYSNGILAPGRCSSQGKSGCSKGDSGREPYIVAHNQLLAHAAVVQIYREKYQGGQKGKIGIAIVSNWMIPYEDSKEDKHATKRALDFMYGWFMDPLTKGDYPVSMRTLVGNRLPRFTKEQSKAINGSFDFIGLNYYTARYIQGTKQDSNSHKSYSTDSLTNERVERNGTDIGPKAGSSWLYIYPKGIEELLLYTKRTYNNPTIYITENGVDEVNNENLSLKEALIDTTRIEFYRQHLFHVQRALRQGVDVRGYFAWSLFDNFEWMDGYSVRFGINYIDYKDGLKRYPKRSSQWLQNFLHN.

Residues 1-18 (MELLWLLLLLLMASSTSS) form the signal peptide. Gln47 contributes to the a beta-D-glucoside binding site. A glycan (N-linked (GlcNAc...) asparagine) is linked at Asn75. Residues His151 and 196 to 197 (NE) contribute to the a beta-D-glucoside site. Catalysis depends on Glu197, which acts as the Proton donor. Cys216 and Cys224 form a disulfide bridge. Residue Asn329 is glycosylated (N-linked (GlcNAc...) asparagine). A beta-D-glucoside is bound at residue Tyr340. Asn371 carries N-linked (GlcNAc...) asparagine glycosylation. Glu411 is a binding site for a beta-D-glucoside. The active-site Nucleophile is Glu411. N-linked (GlcNAc...) asparagine glycosylation is present at Asn421. Residues Trp460, 467 to 468 (EW), and Phe476 each bind a beta-D-glucoside.

Belongs to the glycosyl hydrolase 1 family.

It carries out the reaction Hydrolysis of terminal, non-reducing beta-D-glucosyl residues with release of beta-D-glucose.. The sequence is that of Beta-glucosidase 24 (BGLU24) from Oryza sativa subsp. japonica (Rice).